The sequence spans 203 residues: Small ribosomal subunit protein uS4 (203 aa).

The tract at residues 20-44 (LPGLTRKRPKNTNPPGMHGAERKKK) is disordered. One can recognise an S4 RNA-binding domain in the interval 92 to 155 (MRLDCIVFRL…SSRKLVAAYA (64 aa)).

Belongs to the universal ribosomal protein uS4 family. Part of the 30S ribosomal subunit. Contacts protein S5. The interaction surface between S4 and S5 is involved in control of translational fidelity.

Its function is as follows. One of the primary rRNA binding proteins, it binds directly to 16S rRNA where it nucleates assembly of the body of the 30S subunit. Functionally, with S5 and S12 plays an important role in translational accuracy. This chain is Small ribosomal subunit protein uS4, found in Synechococcus sp. (strain JA-2-3B'a(2-13)) (Cyanobacteria bacterium Yellowstone B-Prime).